Consider the following 547-residue polypeptide: MPSMRVTTDTWPRRAAQEPLLLLLLRSSLMKSASLQALNPNRAMAAMGRSVRVVLDSSVLLDPSGVTAEEEEVVVALRPGAEALLRRLRYSNLRVAICHPEGLTTNESGFLEKTAKLYSFGYMPLTSPSGSNLLNELMLEWSETNFCFYVTSGVHEGLLSELQNHNWEVIAMGNEDVIKNSGVIHISMLQELLITLATSIKKEIGNSSAFVVGYVMKQSREEDFAKRGAFPIYPSKNDLIFVPLSFELPLASQLQEVDLVLHKITDEIINIDPNSSISFPKGISFSPGMSEIIRFVEEHCDFCVIDPFKNIYPLLDRIQIQEILIRLEGLSAEGRPKLRAPCFLKIESFCGSELQKQLAEAKLSFPLIVKPQVACGVADAHNMALIFKIEEFSNLSVPLPAILQEYIDHGSKIFKFYAIGDKIFHAIKNSMPNASHLKSSSGGKPLTFNSLKTLPVATKEQLLQNEVQDSKLLDINLVEEAAKLLKELLGLTIFGFDVVVQESSGDHVIVDLNYLPSFKEVPDNVAMPAFWDAIKQSYESRKQMTQT.

K263 contacts 1D-myo-inositol 1,3,4-trisphosphate. The ATP site is built by R317 and K370. The ATP-grasp domain occupies 327-539 (LEGLSAEGRP…FWDAIKQSYE (213 aa)). H381 and K415 together coordinate 1D-myo-inositol 1,3,4-trisphosphate. ATP is bound by residues 404 to 415 (QEYIDHGSKIFK), S430, and S450. D497, D511, and N513 together coordinate Mg(2+). 1D-myo-inositol 1,3,4-trisphosphate is bound by residues N513 and S517.

Belongs to the ITPK1 family. As to quaternary structure, monomer. Mg(2+) is required as a cofactor.

The catalysed reaction is 1D-myo-inositol 3,4,5,6-tetrakisphosphate + ATP = 1D-myo-inositol 1,3,4,5,6-pentakisphosphate + ADP + H(+). The enzyme catalyses 1D-myo-inositol 1,3,4-trisphosphate + ATP = 1D-myo-inositol 1,3,4,5-tetrakisphosphate + ADP + H(+). It catalyses the reaction 1D-myo-inositol 1,3,4-trisphosphate + ATP = 1D-myo-inositol 1,3,4,6-tetrakisphosphate + ADP + H(+). Functionally, kinase that can phosphorylate various inositol polyphosphate such as Ins(3,4,5,6)P4 or Ins(1,3,4)P3 and participates in phytic acid biosynthesis in developing seeds. Phytic acid is the primary storage form of phosphorus in cereal grains and other plant seeds. This chain is Inositol-tetrakisphosphate 1-kinase 6, found in Oryza sativa subsp. indica (Rice).